The primary structure comprises 260 residues: Small ribosomal subunit protein uS2 (260 aa).

The protein belongs to the universal ribosomal protein uS2 family.

This chain is Small ribosomal subunit protein uS2, found in Mesorhizobium japonicum (strain LMG 29417 / CECT 9101 / MAFF 303099) (Mesorhizobium loti (strain MAFF 303099)).